The chain runs to 211 residues: MDHEDMIKVDASVRERCGTGSARALRARGLIPAVIYGKNRDPINISLSQVDFLKKCRTFPIFSKLIELCIGEKKEYVITKDIQKHPVSGAIAHVDFQFVDQDAEMKMEVPLVFLNEQKCVGVKRGGVINILHRSLIIRCSPHHIPKSLEVDLIDVAIGHSLHVSDLKLPSTINVVMKEEDPVIATVVASGGGISEDAEEAAPASDIPEAGK.

This sequence belongs to the bacterial ribosomal protein bL25 family. CTC subfamily. Part of the 50S ribosomal subunit; part of the 5S rRNA/L5/L18/L25 subcomplex. Contacts the 5S rRNA. Binds to the 5S rRNA independently of L5 and L18.

In terms of biological role, this is one of the proteins that binds to the 5S RNA in the ribosome where it forms part of the central protuberance. This Anaplasma phagocytophilum (strain HZ) protein is Large ribosomal subunit protein bL25.